A 761-amino-acid polypeptide reads, in one-letter code: Phosphoribosylformylglycinamidine synthase subunit PurL (761 aa).

Histidine 58 is an active-site residue. The ATP site is built by tyrosine 61 and lysine 105. Glutamate 107 is a Mg(2+) binding site. Residues 108–111 (SHNH) and arginine 130 contribute to the substrate site. Catalysis depends on histidine 109, which acts as the Proton acceptor. Position 131 (aspartate 131) interacts with Mg(2+). A substrate-binding site is contributed by glutamine 259. Aspartate 287 lines the Mg(2+) pocket. 331–333 (ESQ) serves as a coordination point for substrate. Residues asparagine 519 and glycine 556 each contribute to the ATP site. Asparagine 557 is a binding site for Mg(2+). Serine 559 is a substrate binding site.

It belongs to the FGAMS family. In terms of assembly, monomer. Part of the FGAM synthase complex composed of 1 PurL, 1 PurQ and 2 PurS subunits.

The protein resides in the cytoplasm. It carries out the reaction N(2)-formyl-N(1)-(5-phospho-beta-D-ribosyl)glycinamide + L-glutamine + ATP + H2O = 2-formamido-N(1)-(5-O-phospho-beta-D-ribosyl)acetamidine + L-glutamate + ADP + phosphate + H(+). The protein operates within purine metabolism; IMP biosynthesis via de novo pathway; 5-amino-1-(5-phospho-D-ribosyl)imidazole from N(2)-formyl-N(1)-(5-phospho-D-ribosyl)glycinamide: step 1/2. Its function is as follows. Part of the phosphoribosylformylglycinamidine synthase complex involved in the purines biosynthetic pathway. Catalyzes the ATP-dependent conversion of formylglycinamide ribonucleotide (FGAR) and glutamine to yield formylglycinamidine ribonucleotide (FGAM) and glutamate. The FGAM synthase complex is composed of three subunits. PurQ produces an ammonia molecule by converting glutamine to glutamate. PurL transfers the ammonia molecule to FGAR to form FGAM in an ATP-dependent manner. PurS interacts with PurQ and PurL and is thought to assist in the transfer of the ammonia molecule from PurQ to PurL. The polypeptide is Phosphoribosylformylglycinamidine synthase subunit PurL (Rhodococcus jostii (strain RHA1)).